The primary structure comprises 419 residues: Multidrug efflux pump Tap (419 aa).

Transmembrane regions (helical) follow at residues 7–29 (GPAFLILFATLMAAAGDGVSIVA), 44–66 (ASIVASATMLPLLFATLVAGTAV), 73–95 (RVSMVADALSGAAVAGVPLVAWG), 100–122 (AVNVLVLAVLAALAAAFGPAGMT), 149–171 (ILNLAFIVGPAIGGLMIATVGGI), 175–197 (WITATAFGLSILAIAALQLEGAG), 218–240 (FVWNLRVLRTLGMIDLTVTALYL), 260–282 (LGWALMAIAGGGLVGALGYAVLA), 289–308 (VTMSTAVLTLGLASMVIAFL), 313–335 (VIMVLCAVVGLVYGPIQPIYNYV), 348–370 (VVGVMTSLAYAAGPLGLLLAGPL), and 375–397 (GLHATFLALALPIVCTGLVAIRL).

This sequence belongs to the major facilitator superfamily. Drug:H(+) antiporter-3 (DHA3) (TC 2.A.1.21) family.

The protein localises to the cell inner membrane. With respect to regulation, inhibited by piperine, verapamil and verapamil analogs. In terms of biological role, efflux pump that contributes to intrinsic antibiotic resistance. The pump uses the electrochemical gradient as a source of energy. Confers resistance to rifampicin. Confers low-level resistance to tetracycline and to several aminoglycosides, including streptomycin, gentamicin, 2'-N-ethylnetilmicin and 6'-N-ethylnetilmicin. The sequence is that of Multidrug efflux pump Tap from Mycobacterium tuberculosis (strain ATCC 25618 / H37Rv).